A 133-amino-acid polypeptide reads, in one-letter code: Cytochrome c-554 (133 aa).

Pyrrolidone carboxylic acid is present on glutamine 1. Residues methionine 17, cysteine 122, cysteine 125, and histidine 126 each coordinate heme c.

In terms of processing, binds 1 heme c group covalently per subunit.

It is found in the periplasm. In terms of biological role, monoheme c-type cytochrome, that is particularly expressed when cells generate energy via aerobic respiration. In Cereibacter sphaeroides (Rhodobacter sphaeroides), this protein is Cytochrome c-554 (cycF).